Here is a 243-residue protein sequence, read N- to C-terminus: MSKQKKSEIVNRFRKRFDTKMTELGFTYQNIDLYQQAFSHSSFINDFNMNRLDHNERLEFLGDAVLELTVSRYLFDKHPNLPEGNLTKMRATIVCEPSLVIFANKIGLNEMILLGKGEEKTGGRTRPSLISDAFEAFIGALYLDQGLDIVWKFAEKVIFPHVEQNELLGVVDFKTQFQEYVHQQNKGDVTYNLIKEEGPAHHRLFTSEVILQGEAIAEGKGKTKKESEQRAAKSAYKQLKQIK.

Positions 10-146 (VNRFRKRFDT…FIGALYLDQG (137 aa)) constitute an RNase III domain. E59 contacts Mg(2+). Residue D63 is part of the active site. Positions 132 and 135 each coordinate Mg(2+). The active site involves E135. The DRBM domain occupies 172–241 (DFKTQFQEYV…AKSAYKQLKQ (70 aa)). Positions 219–231 (GKGKTKKESEQRA) are enriched in basic and acidic residues. Positions 219–243 (GKGKTKKESEQRAAKSAYKQLKQIK) are disordered.

Belongs to the ribonuclease III family. In terms of assembly, homodimer. The cofactor is Mg(2+).

It is found in the cytoplasm. The catalysed reaction is Endonucleolytic cleavage to 5'-phosphomonoester.. Digests double-stranded RNA. Involved in the processing of primary rRNA transcript to yield the immediate precursors to the large and small rRNAs (23S and 16S). Processes some mRNAs, and tRNAs when they are encoded in the rRNA operon. Processes pre-crRNA and tracrRNA of type II CRISPR loci if present in the organism. This is Ribonuclease 3 from Staphylococcus aureus (strain Mu3 / ATCC 700698).